We begin with the raw amino-acid sequence, 115 residues long: Large ribosomal subunit protein P2z (115 aa).

Residues 62-115 (LASVPSGGGGGVAVASATSGGGGGGGAPAAESKKEEKKEEKEESDDDMGFSLFE) form a disordered region. A compositionally biased stretch (basic and acidic residues) spans 92–102 (ESKKEEKKEEK). Serine 105 is subject to Phosphoserine.

It belongs to the eukaryotic ribosomal protein P1/P2 family. As to quaternary structure, P1 and P2 exist as dimers at the large ribosomal subunit. In terms of processing, phosphorylated.

Functionally, plays an important role in the elongation step of protein synthesis. The sequence is that of Large ribosomal subunit protein P2z (RPP2A) from Arabidopsis thaliana (Mouse-ear cress).